The primary structure comprises 165 residues: Phosphopantetheine adenylyltransferase (165 aa).

Ser10 contributes to the substrate binding site. ATP is bound by residues 10–11 (SF) and His18. Substrate is bound by residues Lys42, Leu74, and Arg88. Residues 89 to 91 (GLR), Glu99, and 124 to 130 (WFYTSST) each bind ATP.

This sequence belongs to the bacterial CoaD family. Homohexamer. Mg(2+) is required as a cofactor.

The protein localises to the cytoplasm. It carries out the reaction (R)-4'-phosphopantetheine + ATP + H(+) = 3'-dephospho-CoA + diphosphate. The protein operates within cofactor biosynthesis; coenzyme A biosynthesis; CoA from (R)-pantothenate: step 4/5. Functionally, reversibly transfers an adenylyl group from ATP to 4'-phosphopantetheine, yielding dephospho-CoA (dPCoA) and pyrophosphate. In Syntrophus aciditrophicus (strain SB), this protein is Phosphopantetheine adenylyltransferase.